Here is a 104-residue protein sequence, read N- to C-terminus: Circadian clock oscillator protein KaiB (104 aa).

The protein belongs to the KaiB family. The KaiABC complex composition changes during the circadian cycle to control KaiC phosphorylation. Complexes KaiC(6), KaiA(2-4):KaiC(6), KaiB(6):KaiC(6) and KaiC(6):KaiB(6):KaiA(12) are among the most important forms, many form cooperatively. Undergoes a major conformational rearrangment; in the free state forms homotetramers as a dimer of dimers. When bound to the CI domain of KaiC switches to a monomeric thioredoxin-fold (KaiB(fs)). KaiB(fs) binds CikA, leading it to dephosphorylate phospho-RpaA.

Its function is as follows. Key component of the KaiABC oscillator complex, which constitutes the main circadian regulator in cyanobacteria. Complex composition changes during the circadian cycle to control KaiC phosphorylation. KaiA stimulates KaiC autophosphorylation, while KaiB sequesters KaiA, leading to KaiC autodephosphorylation. Phospho-Ser-431 KaiC accumulation triggers binding of KaiB to form the KaiB(6):KaiC(6) complex, leading to changes in output regulators CikA and SasA. KaiB switches to a thioredoxin-like fold (KaiB(fs)) when bound to KaiC. KaiB(6):KaiC(6) formation exposes a site for KaiA binding that sequesters KaiA from KaiC, making the KaiC(6):KaiB(6):KaiA(12) complex that results in KaiC autodephosphorylation. In terms of biological role, a metamorphic protein which reversibly switches between an inactive tetrameric fold and a rare, thioredoxin-like monomeric fold (KaiB(fs)). KaiB(fs) binds phospho-KaiC, KaiA and CikA. KaiA and CikA compete for binding to KaiB(fs), and KaiB(fs) and SasA compete for binding to KaiC, thus the clock oscillator and output signal pathway are tightly coupled. The chain is Circadian clock oscillator protein KaiB from Nostoc punctiforme (strain ATCC 29133 / PCC 73102).